Reading from the N-terminus, the 118-residue chain is Protein BEX4 (118 aa).

A disordered region spans residues 14-50; it reads VEKDKKDKKGGKASKQSEEEPHHLEEVENKKPGGNVR. Over residues 28-44 the composition is skewed to basic and acidic residues; that stretch reads KQSEEEPHHLEEVENKK. Residues 30–88 are interaction with SIRT2; it reads SEEEPHHLEEVENKKPGGNVRRKVRRLVPNFLWAIPNRHVDRNEGGEDVGRFVVQGTEV. The tract at residues 30–118 is interaction with alpha-tubulin; it reads SEEEPHHLEE…DNHYDFCLIP (89 aa). Zn(2+) is bound at residue cysteine 115.

This sequence belongs to the BEX family. As to quaternary structure, interacts with alpha-tubulin. Interacts with SIRT2. Ubiquitinated and degraded by the proteasome. As to expression, expressed in both Sertoli and germ cells as well as interstitial area of the testis (at protein level).

It localises to the cytoplasm. The protein localises to the cytoskeleton. It is found in the spindle pole. The protein resides in the nucleus. Its function is as follows. May play a role in microtubule deacetylation by negatively regulating the SIRT2 deacetylase activity toward alpha-tubulin and thereby participate in the control of cell cycle progression and genomic stability. In absence of reductive stress, acts as a pseudosubstrate for the CRL2(FEM1B) complex: associates with FEM1B via zinc, thereby preventing association between FEM1B and its substrates. This Mus musculus (Mouse) protein is Protein BEX4.